A 157-amino-acid chain; its full sequence is ATP synthase subunit b', chloroplastic (157 aa).

The helical transmembrane segment at 26-43 (LMASQFLLIMLILDITFY) threads the bilayer.

The protein belongs to the ATPase B chain family. As to quaternary structure, F-type ATPases have 2 components, F(1) - the catalytic core - and F(0) - the membrane proton channel. F(1) has five subunits: alpha(3), beta(3), gamma(1), delta(1), epsilon(1). F(0) has four main subunits: a(1), b(1), b'(1) and c(10-14). The alpha and beta chains form an alternating ring which encloses part of the gamma chain. F(1) is attached to F(0) by a central stalk formed by the gamma and epsilon chains, while a peripheral stalk is formed by the delta, b and b' chains.

It localises to the plastid. It is found in the chloroplast thylakoid membrane. Functionally, f(1)F(0) ATP synthase produces ATP from ADP in the presence of a proton or sodium gradient. F-type ATPases consist of two structural domains, F(1) containing the extramembraneous catalytic core and F(0) containing the membrane proton channel, linked together by a central stalk and a peripheral stalk. During catalysis, ATP synthesis in the catalytic domain of F(1) is coupled via a rotary mechanism of the central stalk subunits to proton translocation. Its function is as follows. Component of the F(0) channel, it forms part of the peripheral stalk, linking F(1) to F(0). The b'-subunit is a diverged and duplicated form of b found in plants and photosynthetic bacteria. In Cyanidium caldarium (Red alga), this protein is ATP synthase subunit b', chloroplastic.